Reading from the N-terminus, the 369-residue chain is Protein HGH1 homolog (369 aa).

The protein belongs to the HGH1 family.

This is Protein HGH1 homolog from Drosophila melanogaster (Fruit fly).